A 40-amino-acid chain; its full sequence is Photosystem I reaction center subunit IX (40 aa).

The chain crosses the membrane as a helical span at residues 4 to 24 (FFESWPMAAVLWVWLTAGIIV).

This sequence belongs to the PsaJ family.

It localises to the cellular thylakoid membrane. May help in the organization of the PsaE and PsaF subunits. The sequence is that of Photosystem I reaction center subunit IX from Prochlorococcus marinus (strain MIT 9313).